Reading from the N-terminus, the 490-residue chain is Betaine aldehyde dehydrogenase (490 aa).

Thr-26, Ile-27, and Asp-93 together coordinate K(+). Position 150–152 (150–152 (GAW)) interacts with NAD(+). Lys-162 serves as the catalytic Charge relay system. 176–179 (KPSE) contacts NAD(+). Position 180 (Val-180) interacts with K(+). 230–233 (GVAS) lines the NAD(+) pocket. Leu-246 provides a ligand contact to K(+). Glu-252 acts as the Proton acceptor in catalysis. Residues Gly-254, Cys-286, and Glu-387 each contribute to the NAD(+) site. Cys-286 acts as the Nucleophile in catalysis. Cysteine sulfenic acid (-SOH) is present on Cys-286. Residues Lys-457 and Gly-460 each coordinate K(+). Catalysis depends on Glu-464, which acts as the Charge relay system.

Belongs to the aldehyde dehydrogenase family. As to quaternary structure, dimer of dimers. Requires K(+) as cofactor.

The catalysed reaction is betaine aldehyde + NAD(+) + H2O = glycine betaine + NADH + 2 H(+). It participates in amine and polyamine biosynthesis; betaine biosynthesis via choline pathway; betaine from betaine aldehyde: step 1/1. In terms of biological role, involved in the biosynthesis of the osmoprotectant glycine betaine. Catalyzes the irreversible oxidation of betaine aldehyde to the corresponding acid. This is Betaine aldehyde dehydrogenase from Escherichia coli (strain K12 / DH10B).